The chain runs to 250 residues: Coproheme decarboxylase (250 aa).

Fe-coproporphyrin III-binding positions include Arg131, 145–149, His172, and Gln185; that span reads YPMNK. Residue Tyr145 is part of the active site.

Belongs to the ChdC family. Type 1 subfamily. It depends on Fe-coproporphyrin III as a cofactor.

The catalysed reaction is Fe-coproporphyrin III + 2 H2O2 + 2 H(+) = heme b + 2 CO2 + 4 H2O. It carries out the reaction Fe-coproporphyrin III + H2O2 + H(+) = harderoheme III + CO2 + 2 H2O. It catalyses the reaction harderoheme III + H2O2 + H(+) = heme b + CO2 + 2 H2O. The protein operates within porphyrin-containing compound metabolism; protoheme biosynthesis. Its function is as follows. Involved in coproporphyrin-dependent heme b biosynthesis. Catalyzes the decarboxylation of Fe-coproporphyrin III (coproheme) to heme b (protoheme IX), the last step of the pathway. The reaction occurs in a stepwise manner with a three-propionate intermediate. In Staphylococcus aureus (strain bovine RF122 / ET3-1), this protein is Coproheme decarboxylase.